Reading from the N-terminus, the 279-residue chain is Bifunctional protein FolD (279 aa).

Residues 164 to 166, serine 189, and isoleucine 230 contribute to the NADP(+) site; that span reads GRS.

It belongs to the tetrahydrofolate dehydrogenase/cyclohydrolase family. As to quaternary structure, homodimer.

The catalysed reaction is (6R)-5,10-methylene-5,6,7,8-tetrahydrofolate + NADP(+) = (6R)-5,10-methenyltetrahydrofolate + NADPH. The enzyme catalyses (6R)-5,10-methenyltetrahydrofolate + H2O = (6R)-10-formyltetrahydrofolate + H(+). It functions in the pathway one-carbon metabolism; tetrahydrofolate interconversion. In terms of biological role, catalyzes the oxidation of 5,10-methylenetetrahydrofolate to 5,10-methenyltetrahydrofolate and then the hydrolysis of 5,10-methenyltetrahydrofolate to 10-formyltetrahydrofolate. The sequence is that of Bifunctional protein FolD from Agathobacter rectalis (strain ATCC 33656 / DSM 3377 / JCM 17463 / KCTC 5835 / VPI 0990) (Eubacterium rectale).